A 619-amino-acid chain; its full sequence is E3 ubiquitin-protein ligase DTX4 (619 aa).

WWE domains follow at residues 1–78 and 79–155; these read MLLA…PVRR and NYYD…RVRR. 2 disordered regions span residues 238-281 and 358-389; these read KPLD…PGPN and PPPV…KGKT. The span at 261 to 273 shows a compositional bias: polar residues; that stretch reads QASSMPTGTTMGS. Basic residues predominate over residues 378–387; sequence KTTKKQAKKG. An RING-type; atypical zinc finger spans residues 409 to 468; it reads CTICMERLTAPSGYKGPQPTVKPDLVGKLSRCGHVYHIYCLVAMYNNGNKDGSLQCPTCK.

This sequence belongs to the Deltex family. As to quaternary structure, interacts with NLRP4.

It is found in the cytoplasm. It catalyses the reaction S-ubiquitinyl-[E2 ubiquitin-conjugating enzyme]-L-cysteine + [acceptor protein]-L-lysine = [E2 ubiquitin-conjugating enzyme]-L-cysteine + N(6)-ubiquitinyl-[acceptor protein]-L-lysine.. It functions in the pathway protein modification; protein ubiquitination. Regulator of Notch signaling, a signaling pathway involved in cell-cell communications that regulates a broad spectrum of cell-fate determinations. Functions as a ubiquitin ligase protein in vivo, mediating 'Lys48'-linked polyubiquitination and promoting degradation of TBK1, targeting to TBK1 requires interaction with NLRP4. This chain is E3 ubiquitin-protein ligase DTX4 (DTX4), found in Homo sapiens (Human).